The chain runs to 314 residues: Small ribosomal subunit biogenesis GTPase RsgA (314 aa).

The disordered stretch occupies residues 1 to 21; that stretch reads MKRAPTKQPAKPAARGGERAQ. The CP-type G domain occupies 85 to 246; it reads SDQFKSKLFA…LIDSPGFQEF (162 aa). Residues 134–137 and 188–196 contribute to the GTP site; these read NKID and GQSGMGKST. Zn(2+) contacts are provided by cysteine 270, cysteine 275, histidine 277, and cysteine 283.

Belongs to the TRAFAC class YlqF/YawG GTPase family. RsgA subfamily. As to quaternary structure, monomer. Associates with 30S ribosomal subunit, binds 16S rRNA. Requires Zn(2+) as cofactor.

It localises to the cytoplasm. In terms of biological role, one of several proteins that assist in the late maturation steps of the functional core of the 30S ribosomal subunit. Helps release RbfA from mature subunits. May play a role in the assembly of ribosomal proteins into the subunit. Circularly permuted GTPase that catalyzes slow GTP hydrolysis, GTPase activity is stimulated by the 30S ribosomal subunit. This is Small ribosomal subunit biogenesis GTPase RsgA from Burkholderia mallei (strain ATCC 23344).